The primary structure comprises 749 residues: Catalase-peroxidase 2 (749 aa).

The N-terminal stretch at 1–27 is a signal peptide; the sequence is MFKRTIPLFAAFTLAISPSIFPNYAHA. Residues 107–229 constitute a cross-link (tryptophyl-tyrosyl-methioninium (Trp-Tyr) (with M-255)); the sequence is WHAAGTYRIY…LAATVMGLIY (123 aa). Catalysis depends on H108, which acts as the Proton acceptor. The segment at residues 229 to 255 is a cross-link (tryptophyl-tyrosyl-methioninium (Tyr-Met) (with W-107)); that stretch reads YVNPEGPNGVPDPLAAAEKIRETFGRM. H270 is a heme b binding site.

Belongs to the peroxidase family. Peroxidase/catalase subfamily. As to quaternary structure, homodimer or homotetramer. The cofactor is heme b. In terms of processing, formation of the three residue Trp-Tyr-Met cross-link is important for the catalase, but not the peroxidase activity of the enzyme.

The catalysed reaction is H2O2 + AH2 = A + 2 H2O. The enzyme catalyses 2 H2O2 = O2 + 2 H2O. Functionally, bifunctional enzyme with both catalase and broad-spectrum peroxidase activity. The sequence is that of Catalase-peroxidase 2 from Legionella pneumophila subsp. pneumophila (strain Philadelphia 1 / ATCC 33152 / DSM 7513).